Consider the following 1615-residue polypeptide: MEAAPPGPPWPLLLLLLLLLALCGCPAPAAASPLLLFANRRDVRLVDAGGVKLESTIVVSGLEDAAAVDFQFSKGAVYWTDVSEEAIKQTYLNQTGAAVQNVVISGLVSPDGLACDWVGKKLYWTDSETNRIEVANLNGTSRKVLFWQDLDQPRAIALDPAHGYMYWTDWGETPRIERAGMDGSTRKIIVDSDIYWPNGLTIDLEEQKLYWADAKLSFIHRANLDGSFRQKVVEGSLTHPFALTLSGDTLYWTDWQTRSIHACNKRTGGKRKEILSALYSPMDIQVLSQERQPFFHTRCEEDNGGCSHLCLLSPSEPFYTCACPTGVQLQDNGRTCKAGAEEVLLLARRTDLRRISLDTPDFTDIVLQVDDIRHAIAIDYDPLEGYVYWTDDEVRAIRRAYLDGSGAQTLVNTEINDPDGIAVDWVARNLYWTDTGTDRIEVTRLNGTSRKILVSEDLDEPRAIALHPVMGLMYWTDWGENPKIECANLDGQERRVLVNASLGWPNGLALDLQEGKLYWGDAKTDKIEVINVDGTKRRTLLEDKLPHIFGFTLLGDFIYWTDWQRRSIERVHKVKASRDVIIDQLPDLMGLKAVNVAKVVGTNPCADRNGGCSHLCFFTPHATRCGCPIGLELLSDMKTCIVPEAFLVFTSRAAIHRISLETNNNDVAIPLTGVKEASALDFDVSNNHIYWTDVSLKTISRAFMNGSSVEHVVEFGLDYPEGMAVDWMGKNLYWADTGTNRIEVARLDGQFRQVLVWRDLDNPRSLALDPTKGYIYWTEWGGKPRIVRAFMDGTNCMTLVDKVGRANDLTIDYADQRLYWTDLDTNMIESSNMLGQERVVIADDLPHPFGLTQYSDYIYWTDWNLHSIERADKTSGRNRTLIQGHLDFVMDILVFHSSRQDGLNDCMHNNGQCGQLCLAIPGGHRCGCASHYTLDPSSRNCSPPTTFLLFSQKSAISRMIPDDQHSPDLILPLHGLRNVKAIDYDPLDKFIYWVDGRQNIKRAKDDGTQPFVLTSLSQGQNPDRQPHDLSIDIYSRTLFWTCEATNTINVHRLSGEAMGVVLRGDRDKPRAIVVNAERGYLYFTNMQDRAAKIERAALDGTEREVLFTTGLIRPVALVVDNTLGKLFWVDADLKRIESCDLSGANRLTLEDANIVQPLGLTILGKHLYWIDRQQQMIERVEKTTGDKRTRIQGRVAHLTGIHAVEEVSLEEFSAHPCARDNGGCSHICIAKGDGTPRCSCPVHLVLLQNLLTCGEPPTCSPDQFACATGEIDCIPGAWRCDGFPECDDQSDEEGCPVCSAAQFPCARGQCVDLRLRCDGEADCQDRSDEADCDAICLPNQFRCASGQCVLIKQQCDSFPDCIDGSDELMCEITKPPSDDSPAHSSAIGPVIGIILSLFVMGGVYFVCQRVVCQRYAGANGPFPHEYVSGTPHVPLNFIAPGGSQHGPFTGIACGKSMMSSVSLMGGRGGVPLYDRNHVTGASSSSSSSTKATLYPPILNPPPSPATDPSLYNMDMFYSSNIPATARPYRPYIIRGMAPPTTPCSTDVCDSDYSASRWKASKYYLDLNSDSDPYPPPPTPHSQYLSAEDSCPPSPATERSYFHLFPPPPSPCTDSS.

Positions 1-31 (MEAAPPGPPWPLLLLLLLLLALCGCPAPAAA) are cleaved as a signal peptide. A beta-propeller 1 region spans residues 32–288 (SPLLLFANRR…YSPMDIQVLS (257 aa)). Residues 32 to 1384 (SPLLLFANRR…PPSDDSPAHS (1353 aa)) lie on the Extracellular side of the membrane. LDL-receptor class B repeat units lie at residues 75–119 (GAVY…DWVG), 120–162 (KKLY…DPAH), 163–206 (GYMY…DLEE), 207–247 (QKLY…TLSG), and 248–290 (DTLY…LSQE). A YWTD 1 repeat occupies 78–81 (YWTD). An N-linked (GlcNAc...) asparagine glycan is attached at Asn93. The YWTD 2 repeat unit spans residues 123-126 (YWTD). Residue Asn138 is glycosylated (N-linked (GlcNAc...) asparagine). Residues 166-169 (YWTD) form a YWTD 3 repeat. A YWTD 4 repeat occupies 251-254 (YWTD). Residues 295 to 337 (FHTRCEEDNGGCSHLCLLSPSEPFYTCACPTGVQLQDNGRTCK) enclose the EGF-like 1 domain. 3 disulfides stabilise this stretch: Cys299-Cys310, Cys306-Cys321, and Cys323-Cys336. Residues 341–602 (EEVLLLARRT…AVNVAKVVGT (262 aa)) are beta-propeller 2. 5 LDL-receptor class B repeats span residues 385-427 (GYVY…DWVA), 428-470 (RNLY…HPVM), 471-514 (GLMY…DLQE), 515-557 (GKLY…LGDF), and 558-600 (IYWT…AKVV). YWTD repeat units follow at residues 388 to 391 (YWTD) and 431 to 434 (YWTD). Asn446 carries an N-linked (GlcNAc...) asparagine glycan. A YWTD 7 repeat occupies 474–477 (YWTD). N-linked (GlcNAc...) asparagine glycosylation is present at Asn499. A YWTD 8 repeat occupies 559-562 (YWTD). The 41-residue stretch at 601–641 (GTNPCADRNGGCSHLCFFTPHATRCGCPIGLELLSDMKTCI) folds into the EGF-like 2 domain. 3 disulfides stabilise this stretch: Cys605-Cys616, Cys612-Cys625, and Cys627-Cys640. The tract at residues 644-903 (EAFLVFTSRA…VFHSSRQDGL (260 aa)) is beta-propeller 3. LDL-receptor class B repeat units lie at residues 687 to 729 (NHIY…DWMG), 730 to 772 (KNLY…DPTK), 773 to 815 (GYIY…DYAD), 816 to 855 (QRLYWTDLDTNMIESSNMLGQERVVIADDLPHPFGLTQYS), and 856 to 898 (DYIY…FHSS). The YWTD 9 repeat unit spans residues 690–693 (YWTD). Residue Asn705 is glycosylated (N-linked (GlcNAc...) asparagine). YWTD repeat units follow at residues 819-822 (YWTD) and 859-862 (YWTD). Residue Asn878 is glycosylated (N-linked (GlcNAc...) asparagine). The EGF-like 3 domain occupies 902–942 (GLNDCMHNNGQCGQLCLAIPGGHRCGCASHYTLDPSSRNCS). Disulfide bonds link Cys906–Cys917, Cys913–Cys926, and Cys928–Cys941. The beta-propeller 4 stretch occupies residues 945 to 1212 (TTFLLFSQKS…AVEEVSLEEF (268 aa)). 5 LDL-receptor class B repeats span residues 989-1035 (KFIY…DIYS), 1036-1078 (RTLF…NAER), 1079-1123 (GYLY…DNTL), 1124-1164 (GKLF…TILG), and 1165-1207 (KHLY…VEEV). Positions 1213–1254 (SAHPCARDNGGCSHICIAKGDGTPRCSCPVHLVLLQNLLTCG) constitute an EGF-like 4 domain. Cystine bridges form between Cys1217/Cys1228, Cys1224/Cys1238, Cys1240/Cys1253, Cys1259/Cys1273, Cys1266/Cys1286, Cys1280/Cys1295, Cys1298/Cys1310, Cys1305/Cys1323, Cys1317/Cys1332, Cys1336/Cys1348, Cys1343/Cys1361, and Cys1355/Cys1370. LDL-receptor class A domains follow at residues 1258 to 1296 (TCSPDQFACATGEIDCIPGAWRCDGFPECDDQSDEEGCP), 1297 to 1333 (VCSAAQFPCARGQCVDLRLRCDGEADCQDRSDEADCD), and 1335 to 1371 (ICLPNQFRCASGQCVLIKQQCDSFPDCIDGSDELMCE). Residues 1385 to 1407 (SAIGPVIGIILSLFVMGGVYFVC) traverse the membrane as a helical segment. The Cytoplasmic portion of the chain corresponds to 1408–1615 (QRVVCQRYAG…PPPSPCTDSS (208 aa)). Residues 1475 to 1501 (RNHVTGASSSSSSSTKATLYPPILNPP) form a disordered region. Residues 1500 to 1506 (PPPSPAT) carry the PPPSP motif A motif. Residues 1538–1545 (PPTTPCST) carry the PPPSP motif B motif. The tract at residues 1568-1615 (SDSDPYPPPPTPHSQYLSAEDSCPPSPATERSYFHLFPPPPSPCTDSS) is disordered. The short motif at 1574–1581 (PPPPTPHS) is the PPPSP motif C element. The PPPSP motif D signature appears at 1591 to 1596 (PPSPAT). Residues 1604 to 1615 (FPPPPSPCTDSS) are compositionally biased toward pro residues. Positions 1605-1612 (PPPPSPCT) match the PPPSP motif E motif.

It belongs to the LDLR family. In terms of assembly, homodimer; disulfide-linked. Forms phosphorylated oligomer aggregates on Wnt-signaling. Component of a Wnt-signaling complex that contains a WNT protein, a FZD protein and LRP5 or LRP6. Interacts with FZD8; the interaction is formed on WNT-binding and signaling. Interacts (via the phosphorylated PPPSP motif domains) with AXIN1; the interaction prevents inhibition of beta-catenin phosphorylation and signaling and is enhanced in the presence of GSK3B and WNT1 or WNT3A. Interacts (via beta-propeller regions 3 and 4) with DKK1; the interaction, enhanced by MESD and/or KREMEN, inhibits beta-catenin signaling by preventing GSK3-mediated phosphorylation of the PPPSP motifs and subsequent, AXIN1 binding. Interacts with MESD; the interaction prevents the formation of LRP5 aggregates, targets LRP5 to the plasma membrane and, when complexed with KREMEN2, increases DKK1 binding. Interacts with CSNK1E. Interacts with SOST; the interaction antagonizes canonical Wnt signaling. Interacts with APCDD1. Interacts with CAPRIN2. Post-translationally, phosphorylation of cytoplasmic PPPSP motifs regulates the signal transduction of the Wnt signaling pathway through acting as a docking site for AXIN1. In terms of tissue distribution, widely expressed, with the highest level of expression in the liver and in aorta.

It is found in the membrane. Its subcellular location is the endoplasmic reticulum. Acts as a coreceptor with members of the frizzled family of seven-transmembrane spanning receptors to transduce signal by Wnt proteins. Activates the canonical Wnt signaling pathway that controls cell fate determination and self-renewal during embryonic development and adult tissue regeneration. In particular, may play an important role in the development of the posterior patterning of the epiblast during gastrulation. During bone development, regulates osteoblast proliferation and differentiation thus determining bone mass. Mechanistically, the formation of the signaling complex between Wnt ligand, frizzled receptor and LRP5 coreceptor promotes the recruitment of AXIN1 to LRP5, stabilizing beta-catenin/CTNNB1 and activating TCF/LEF-mediated transcriptional programs. Acts as a coreceptor for non-Wnt proteins, such as norrin/NDP. Binding of norrin/NDP to frizzled 4/FZD4-LRP5 receptor complex triggers beta-catenin/CTNNB1-dependent signaling known to be required for retinal vascular development. Plays a role in controlling postnatal vascular regression in retina via macrophage-induced endothelial cell apoptosis. This Homo sapiens (Human) protein is Low-density lipoprotein receptor-related protein 5.